We begin with the raw amino-acid sequence, 210 residues long: MKIVEVRHPLVQHKIGLLRDAALSTKGFRELVTELGTLLAYEATANLDTESHTQPGWAGPVTVQRIAGAKITLVPILRAGLGMLPGVLALIPAARVSVVGLQRDEETLQPVPYFERLTGRLEERDALILDPMLATGGTLIATIDMLKRAGARRIKGIFLVAAPEGLKALEAAHPDVEVYTAAIDDHLNDKGYILPGLGDAGDRIFGTRLE.

Residues Arg-78, Arg-103, and 130 to 138 (DPMLATGGT) contribute to the 5-phospho-alpha-D-ribose 1-diphosphate site. Residues Ile-193 and 198–200 (GDA) each bind uracil. Position 199 (Asp-199) interacts with 5-phospho-alpha-D-ribose 1-diphosphate.

This sequence belongs to the UPRTase family. Mg(2+) serves as cofactor.

The catalysed reaction is UMP + diphosphate = 5-phospho-alpha-D-ribose 1-diphosphate + uracil. It participates in pyrimidine metabolism; UMP biosynthesis via salvage pathway; UMP from uracil: step 1/1. Allosterically activated by GTP. Catalyzes the conversion of uracil and 5-phospho-alpha-D-ribose 1-diphosphate (PRPP) to UMP and diphosphate. This chain is Uracil phosphoribosyltransferase, found in Xanthomonas axonopodis pv. citri (strain 306).